The following is a 115-amino-acid chain: Con-Ins T1B (115 aa).

The N-terminal stretch at 1 to 24 is a signal peptide; sequence MTTSFYFLLMALGLLLYVCQSSFG. Residues 25-29 constitute a propeptide that is removed on maturation; the sequence is NQHTR. The residue at position 34 (Pro-34) is a 4-hydroxyproline; partial. Cystine bridges form between Cys-38–Cys-101, Cys-50–Cys-114, and Cys-100–Cys-105. A propeptide spans 52-94 (c peptide); sequence RKRNDAGKKRGQASPLWQRGGSLSMLKARAKRNEAFHLQRAHR. 4-carboxyglutamate is present on Glu-98. Pro-104 is modified (4-hydroxyproline; partial). At Glu-109 the chain carries 4-carboxyglutamate; partial. Cys-114 carries the post-translational modification Cysteine amide.

The protein belongs to the insulin family. In terms of assembly, heterodimer of A and B chains; disulfide-linked. In terms of tissue distribution, expressed by the venom gland.

It localises to the secreted. Its function is as follows. This venom insulin, from a fish-hunting cone snail, facilitates prey capture by rapidly inducing hypoglycemic shock. It is one of the smallest known insulin found in nature and lacks the C-terminal segment of the B chain that, in human insulin, mediates engagement of the insulin receptor (INSR) and assembly of the hormone's hexameric storage form. Despite lacking this segment, it both binds and activates human insulin receptor (long isoform (HIR-B) of INSR) with a high potency (EC(50)=12.0 nM). In vivo, intraperitoneal injection of this peptide into zebrafish lowers blood glucose with a lower potency than human insulin. In addition, when applied to water, this peptide reduces overall locomotor activity of zebrafish larvae, observed as a significant decrease in the percentage of time spent swimming and movement frequency. When tested on a mouse model of diabetes, this insulin also lowers blood glucose with a 10-fold lower potency than human insulin. The polypeptide is Con-Ins T1B (Conus tulipa (Fish-hunting cone snail)).